A 266-amino-acid chain; its full sequence is Undecaprenyl-diphosphatase (266 aa).

The next 8 helical transmembrane spans lie at 1–21 (MTWL…FLPI), 39–59 (QGLA…MVYF), 87–107 (WAVI…DSWI), 111–131 (LRSA…LGMA), 143–163 (FTLK…IPGT), 186–206 (FSFL…GLEL), 217–237 (EIAG…HLFL), and 243–263 (IGFM…LVWL).

Belongs to the UppP family.

It localises to the cell inner membrane. The catalysed reaction is di-trans,octa-cis-undecaprenyl diphosphate + H2O = di-trans,octa-cis-undecaprenyl phosphate + phosphate + H(+). Catalyzes the dephosphorylation of undecaprenyl diphosphate (UPP). Confers resistance to bacitracin. The chain is Undecaprenyl-diphosphatase from Hahella chejuensis (strain KCTC 2396).